Here is a 184-residue protein sequence, read N- to C-terminus: UPF0397 protein SAS2570 (184 aa).

5 consecutive transmembrane segments (helical) span residues 11 to 31, 44 to 64, 77 to 97, 111 to 131, and 148 to 168; these read VVAI…VVIP, AFLA…TGLV, AWWS…WIGL, MIYF…LIAP, and QGVI…TILL.

This sequence belongs to the UPF0397 family.

The protein localises to the cell membrane. The sequence is that of UPF0397 protein SAS2570 from Staphylococcus aureus (strain MSSA476).